Here is a 1076-residue protein sequence, read N- to C-terminus: Carbamoyl phosphate synthase large chain (1076 aa).

The carboxyphosphate synthetic domain stretch occupies residues 1–403; the sequence is MPKRTDIQSI…SLQKALRGLE (403 aa). Positions 129, 169, 175, 176, 208, 210, 215, 241, 242, 243, 285, and 299 each coordinate ATP. The ATP-grasp 1 domain occupies 133–328; it reads DQAMKRIGLE…IAKIAAKLAV (196 aa). Residues glutamine 285, glutamate 299, and asparagine 301 each contribute to the Mg(2+) site. Mn(2+)-binding residues include glutamine 285, glutamate 299, and asparagine 301. An oligomerization domain region spans residues 404-553; it reads TGNDGLDPKV…YSSYEEECEA (150 aa). Positions 554–935 are carbamoyl phosphate synthetic domain; that stretch reads EVSDRPKIMV…AFYKAQLGAG (382 aa). In terms of domain architecture, ATP-grasp 2 spans 678-869; it reads QHMVDKLGLK…LAQVAARCMA (192 aa). Residues arginine 714, histidine 753, leucine 755, glutamate 760, glycine 785, valine 786, histidine 787, serine 788, glutamine 828, and glutamate 840 each coordinate ATP. Glutamine 828, glutamate 840, and asparagine 842 together coordinate Mg(2+). Mn(2+) is bound by residues glutamine 828, glutamate 840, and asparagine 842. The 141-residue stretch at 936–1076 folds into the MGS-like domain; that stretch reads EAIPALEGER…LQELHAGVSQ (141 aa). Positions 936-1076 are allosteric domain; sequence EAIPALEGER…LQELHAGVSQ (141 aa).

It belongs to the CarB family. As to quaternary structure, composed of two chains; the small (or glutamine) chain promotes the hydrolysis of glutamine to ammonia, which is used by the large (or ammonia) chain to synthesize carbamoyl phosphate. Tetramer of heterodimers (alpha,beta)4. Mg(2+) serves as cofactor. The cofactor is Mn(2+).

The catalysed reaction is hydrogencarbonate + L-glutamine + 2 ATP + H2O = carbamoyl phosphate + L-glutamate + 2 ADP + phosphate + 2 H(+). It catalyses the reaction hydrogencarbonate + NH4(+) + 2 ATP = carbamoyl phosphate + 2 ADP + phosphate + 2 H(+). It functions in the pathway amino-acid biosynthesis; L-arginine biosynthesis; carbamoyl phosphate from bicarbonate: step 1/1. The protein operates within pyrimidine metabolism; UMP biosynthesis via de novo pathway; (S)-dihydroorotate from bicarbonate: step 1/3. Functionally, large subunit of the glutamine-dependent carbamoyl phosphate synthetase (CPSase). CPSase catalyzes the formation of carbamoyl phosphate from the ammonia moiety of glutamine, carbonate, and phosphate donated by ATP, constituting the first step of 2 biosynthetic pathways, one leading to arginine and/or urea and the other to pyrimidine nucleotides. The large subunit (synthetase) binds the substrates ammonia (free or transferred from glutamine from the small subunit), hydrogencarbonate and ATP and carries out an ATP-coupled ligase reaction, activating hydrogencarbonate by forming carboxy phosphate which reacts with ammonia to form carbamoyl phosphate. The sequence is that of Carbamoyl phosphate synthase large chain from Halomonas eurihalina.